The chain runs to 514 residues: Multifunctional alkaline phosphatase superfamily protein PehA (514 aa).

The Mn(2+) site is built by D12, C57, D324, and H325. C57 acts as the Nucleophile in catalysis. The residue at position 57 (C57) is a 3-oxoalanine (Cys).

Belongs to the alkaline phosphatase superfamily. In terms of assembly, homotetramer. Mn(2+) serves as cofactor. Post-translationally, the conversion to 3-oxoalanine (also known as C-formylglycine, FGly), of a serine or cysteine residue in prokaryotes and of a cysteine residue in eukaryotes, is critical for catalytic activity. Phosphate triester hydrolytic activity is retained with unmodified cysteine acting as a nucleophile.

Anions including Cl(-) and CH3COO(-), and SO4(2-) salts stimulate activity 20-40% at 100 mM. In terms of biological role, hydrolytic enzyme with a broad substrate specificity acting on phosphate diesters and phosphonate monoesters. Hydrolyzes phosphate mono- and triesters, sulfate monoesters and sulfonate monoesters. Hydrolyzes glyphosate monoesters. Does not hydrolyze DNA or cGMP. Hydrolyzes glyceryl glyphosate, but this substrate has a much lower affinity than the glyphosate monoesters. This chain is Multifunctional alkaline phosphatase superfamily protein PehA, found in Trinickia caryophylli (Paraburkholderia caryophylli).